The primary structure comprises 361 residues: Divinyl chlorophyll a/b light-harvesting protein PcbE (361 aa).

6 helical membrane passes run 27–47, 88–108, 149–169, 210–230, 250–270, and 315–335; these read FIGS…ANTL, VAFV…AGLL, FILG…VEWA, VMGG…FHIA, AVLS…AFWC, and LSNV…WHAI.

The protein belongs to the PsbB/PsbC family. IsiA/Pcb subfamily. In terms of assembly, the antenna complex consists of divinyl chlorophylls (a and b) and divinyl chlorophyll a/b binding proteins and binds more divinyl chlorophyll b than does the antenna complex from high-light-adapted Prochlorococcus. Requires divinyl chlorophyll a as cofactor. It depends on divinyl chlorophyll b as a cofactor.

It is found in the cellular thylakoid membrane. In terms of biological role, the antenna complex functions as a light receptor, it captures and delivers excitation energy to photosystems II and I. The Prochlorales pcb genes are not related to higher plant LHCs. The sequence is that of Divinyl chlorophyll a/b light-harvesting protein PcbE (pcbE) from Prochlorococcus marinus (strain SARG / CCMP1375 / SS120).